A 387-amino-acid chain; its full sequence is MSVIKMTDLDLAGKRVLIRADLNVPVKDGKVTSDARIVATLPTIKLALEKGAKLMITSHLGRPTEGEYNEEFSLAPVVNYLKDALSCPVRLAKDYLDGVDVAAGELVVLENCRFNKGEKKNTEELAKKYAALCDVFVMDAFGTAHRAEGSTYGVAQFAPIACAGPLLAGELEALGKAMLKPERPMVAIVGGSKVSTKLTVLESLSKIADQLVVGGGIANTFIAAAGHNVGKSLCEHDLLDTAKKLAAETNIPVTTDVVVGTEFSESTPATIKSVSDVTDGDMIFDIGPDSAKALADIIMNAKTILWNGPVGVFEFDQFSAGTKVIAEAIAASPAFSIAGGGDTLAAIDKFGIADKVSYISTGGGAFLEFVEGKVLPAVAMLEQRAKA.

Substrate is bound by residues 21-23, arginine 36, 59-62, arginine 113, and arginine 146; these read DLN and HLGR. Residues lysine 197, glutamate 314, and 340 to 343 each bind ATP; that span reads GGDT.

This sequence belongs to the phosphoglycerate kinase family. As to quaternary structure, monomer.

The protein localises to the cytoplasm. The catalysed reaction is (2R)-3-phosphoglycerate + ATP = (2R)-3-phospho-glyceroyl phosphate + ADP. It functions in the pathway carbohydrate degradation; glycolysis; pyruvate from D-glyceraldehyde 3-phosphate: step 2/5. This Aeromonas salmonicida (strain A449) protein is Phosphoglycerate kinase.